A 370-amino-acid chain; its full sequence is GTPase Obg (370 aa).

The 159-residue stretch at 1-159 (MKFVDEAYID…KKLKLELRVL (159 aa)) folds into the Obg domain. Residues 160 to 333 (ADVGLLGMPN…LVQAIYQHVA (174 aa)) enclose the OBG-type G domain. GTP-binding positions include 166-173 (GMPNAGKS), 191-195 (FTTLH), 213-216 (DVPG), 283-286 (NKLD), and 314-316 (SAL). Mg(2+) is bound by residues serine 173 and threonine 193. The tract at residues 346–370 (FAEPEADESDDEPRFAPQADDPRFR) is disordered.

It belongs to the TRAFAC class OBG-HflX-like GTPase superfamily. OBG GTPase family. In terms of assembly, monomer. Mg(2+) serves as cofactor.

It is found in the cytoplasm. Functionally, an essential GTPase which binds GTP, GDP and possibly (p)ppGpp with moderate affinity, with high nucleotide exchange rates and a fairly low GTP hydrolysis rate. Plays a role in control of the cell cycle, stress response, ribosome biogenesis and in those bacteria that undergo differentiation, in morphogenesis control. This Methylibium petroleiphilum (strain ATCC BAA-1232 / LMG 22953 / PM1) protein is GTPase Obg.